The sequence spans 199 residues: Imidazole glycerol phosphate synthase subunit HisH (199 aa).

A Glutamine amidotransferase type-1 domain is found at 2-199 (RAVIIDYGVG…LTNVYRWLRK (198 aa)). Cys-76 acts as the Nucleophile in catalysis. Catalysis depends on residues His-178 and Glu-180.

As to quaternary structure, heterodimer of HisH and HisF.

The protein resides in the cytoplasm. It carries out the reaction 5-[(5-phospho-1-deoxy-D-ribulos-1-ylimino)methylamino]-1-(5-phospho-beta-D-ribosyl)imidazole-4-carboxamide + L-glutamine = D-erythro-1-(imidazol-4-yl)glycerol 3-phosphate + 5-amino-1-(5-phospho-beta-D-ribosyl)imidazole-4-carboxamide + L-glutamate + H(+). It catalyses the reaction L-glutamine + H2O = L-glutamate + NH4(+). The protein operates within amino-acid biosynthesis; L-histidine biosynthesis; L-histidine from 5-phospho-alpha-D-ribose 1-diphosphate: step 5/9. In terms of biological role, IGPS catalyzes the conversion of PRFAR and glutamine to IGP, AICAR and glutamate. The HisH subunit catalyzes the hydrolysis of glutamine to glutamate and ammonia as part of the synthesis of IGP and AICAR. The resulting ammonia molecule is channeled to the active site of HisF. This Sulfolobus acidocaldarius (strain ATCC 33909 / DSM 639 / JCM 8929 / NBRC 15157 / NCIMB 11770) protein is Imidazole glycerol phosphate synthase subunit HisH.